A 1885-amino-acid polypeptide reads, in one-letter code: Fatty acid synthase subunit alpha (1885 aa).

The segment covering 92–107 (PDPADLAPKETPKQEE) has biased composition (basic and acidic residues). The segment at 92 to 140 (PDPADLAPKETPKQEESTPSAPAAATPTPAAAAAPTPAPAPASAGPVES) is disordered. Low complexity predominate over residues 108-126 (STPSAPAAATPTPAAAAAP). The region spanning 146–221 (VKANLLIHVL…EQFQDSFSGQ (76 aa)) is the Carrier domain. Position 181 is an O-(pantetheine 4'-phosphoryl)serine (serine 181). Positions 1121 to 1661 (IQEIVVQHDL…QKGAQAVVVH (541 aa)) constitute a Ketosynthase family 3 (KS3) domain. Residues cysteine 1304, histidine 1546, and histidine 1587 each act as for beta-ketoacyl synthase activity in the active site. Positions 1771, 1772, and 1773 each coordinate Mg(2+). Acetyl-CoA is bound by residues 1771 to 1773 (DVE), tyrosine 1797, serine 1807, 1816 to 1826 (EAVFKALGVES), 1840 to 1843 (RDVN), and 1870 to 1872 (ISH). Mg(2+) contacts are provided by serine 1871 and histidine 1872.

Belongs to the thiolase-like superfamily. Fungal fatty acid synthetase subunit alpha family. As to quaternary structure, [Alpha(6)beta(6)] hexamers of two multifunctional subunits (alpha and beta).

It catalyses the reaction acetyl-CoA + n malonyl-CoA + 2n NADPH + 4n H(+) = a long-chain-acyl-CoA + n CoA + n CO2 + 2n NADP(+).. The catalysed reaction is a fatty acyl-[ACP] + malonyl-[ACP] + H(+) = a 3-oxoacyl-[ACP] + holo-[ACP] + CO2. It carries out the reaction a (3R)-hydroxyacyl-[ACP] + NADP(+) = a 3-oxoacyl-[ACP] + NADPH + H(+). In terms of biological role, fatty acid synthetase catalyzes the formation of long-chain fatty acids from acetyl-CoA, malonyl-CoA and NADPH. The alpha subunit contains domains for: acyl carrier protein, 3-oxoacyl-[acyl-carrier-protein] reductase, and 3-oxoacyl-[acyl-carrier-protein] synthase. The polypeptide is Fatty acid synthase subunit alpha (FAS2) (Candida albicans (Yeast)).